The following is a 368-amino-acid chain: H-2 class I histocompatibility antigen, K-W28 alpha chain (368 aa).

An N-terminal signal peptide occupies residues 1-21 (MAPCMLLLLLAAALAPTQTRA). Residues 22-111 (GPHSLRYFHT…LLRYYNQSAG (90 aa)) form an alpha-1 region. Topologically, residues 22-305 (GPHSLRYFHT…EPPPSAVSNT (284 aa)) are extracellular. Residue N107 is glycosylated (N-linked (GlcNAc...) asparagine). Positions 112–203 (GSHTIQRMYG…KNGNATLLRT (92 aa)) are alpha-2. C122 and C185 are oxidised to a cystine. An N-linked (GlcNAc...) asparagine glycan is attached at N197. Residues 204 to 295 (DSPKAHVTHH…GLPKPLTLRW (92 aa)) are alpha-3. Positions 206–292 (PKAHVTHHSR…YHQGLPKPLT (87 aa)) constitute an Ig-like C1-type domain. C224 and C280 are joined by a disulfide. Residues 296-305 (EPPPSAVSNT) form a connecting peptide region. Residues 306–329 (VIIAVLVVLGAAIVTGAVVAFVMM) form a helical membrane-spanning segment. The Cytoplasmic segment spans residues 330-368 (RRRNTGGKGGDYALAPGSQTSDLSLPDCKVMVHDPHSLA). Phosphoserine is present on residues S350 and S353.

Belongs to the MHC class I family. Heterodimer of an alpha chain and a beta chain (beta-2-microglobulin).

The protein localises to the membrane. In terms of biological role, involved in the presentation of foreign antigens to the immune system. This Mus musculus (Mouse) protein is H-2 class I histocompatibility antigen, K-W28 alpha chain (H2-K1).